Consider the following 2209-residue polypeptide: Kinetochore-associated protein 1 (2209 aa).

A Phosphothreonine; by TTK modification is found at Thr-13. Ser-15 carries the phosphoserine; by TTK modification. Phosphothreonine is present on Thr-1035. The residue at position 1045 (Ser-1045) is a Phosphoserine.

Interacts with ZW10; the interaction is required for stable association with the kinetochore. Component of the RZZ complex composed of KNTC1/ROD, ZW10 and ZWILCH; in the complex interacts directly with ZWILCH. In terms of tissue distribution, high expression in testis.

The protein resides in the cytoplasm. The protein localises to the nucleus. Its subcellular location is the chromosome. It localises to the centromere. It is found in the kinetochore. The protein resides in the cytoskeleton. The protein localises to the spindle. Essential component of the mitotic checkpoint, which prevents cells from prematurely exiting mitosis. Required for the assembly of the dynein-dynactin and MAD1-MAD2 complexes onto kinetochores. Its function related to the spindle assembly machinery is proposed to depend on its association in the mitotic RZZ complex. This chain is Kinetochore-associated protein 1 (KNTC1), found in Homo sapiens (Human).